The primary structure comprises 362 residues: 3-dehydroquinate synthase (362 aa).

Residues 71 to 76, 105 to 109, 129 to 130, K142, K151, and 169 to 172 each bind NAD(+); these read DGEQYK, GVVGD, TT, and CLKT. E184, H247, and H264 together coordinate Zn(2+).

The protein belongs to the sugar phosphate cyclases superfamily. Dehydroquinate synthase family. Requires Co(2+) as cofactor. It depends on Zn(2+) as a cofactor. NAD(+) serves as cofactor.

It is found in the cytoplasm. It catalyses the reaction 7-phospho-2-dehydro-3-deoxy-D-arabino-heptonate = 3-dehydroquinate + phosphate. It participates in metabolic intermediate biosynthesis; chorismate biosynthesis; chorismate from D-erythrose 4-phosphate and phosphoenolpyruvate: step 2/7. Its function is as follows. Catalyzes the conversion of 3-deoxy-D-arabino-heptulosonate 7-phosphate (DAHP) to dehydroquinate (DHQ). The sequence is that of 3-dehydroquinate synthase from Shigella flexneri serotype 5b (strain 8401).